Reading from the N-terminus, the 168-residue chain is GTP-dependent dephospho-CoA kinase (168 aa).

Asp49, Val50, Val51, Asp68, Lys70, and Glu120 together coordinate GTP.

It belongs to the GTP-dependent DPCK family.

The catalysed reaction is 3'-dephospho-CoA + GTP = GDP + CoA + H(+). Its pathway is cofactor biosynthesis; coenzyme A biosynthesis. Its function is as follows. Catalyzes the GTP-dependent phosphorylation of the 3'-hydroxyl group of dephosphocoenzyme A to form coenzyme A (CoA). This chain is GTP-dependent dephospho-CoA kinase, found in Pyrobaculum calidifontis (strain DSM 21063 / JCM 11548 / VA1).